A 258-amino-acid chain; its full sequence is Venom plasminogen activator Haly-PA (258 aa).

An N-terminal signal peptide occupies residues Met-1–Ala-18. Residues Gln-19–Leu-24 constitute a propeptide that is removed on maturation. The 225-residue stretch at Val-25–Ala-249 folds into the Peptidase S1 domain. Disulfide bonds link Cys-31/Cys-163, Cys-50/Cys-66, Cys-98/Cys-256, Cys-142/Cys-210, Cys-174/Cys-189, and Cys-200/Cys-225. Residue Asn-44 is glycosylated (N-linked (GlcNAc...) asparagine). Residues His-65 and Asp-110 each act as charge relay system in the active site. Ser-204 serves as the catalytic Charge relay system.

This sequence belongs to the peptidase S1 family. Snake venom subfamily. Monomer. In terms of processing, glycosylated. Expressed by the venom gland.

The protein localises to the secreted. Functionally, snake venom serine protease that activates plasminogen. Displays indirect fibrino(geno)lytic activity through conversion of plasminogen to plasmin. Shows a preferential cleavage at Arg-|-Xaa instead of Lys-|-Xaa bonds. The chain is Venom plasminogen activator Haly-PA from Gloydius brevicauda (Korean slamosa snake).